The following is a 139-amino-acid chain: Putative lipoprotein MIP_01412 (139 aa).

Residues 1 to 19 (MRNRTVAAGAVLTAALLGA) form the signal peptide. Cys-20 is lipidated: N-palmitoyl cysteine. The S-diacylglycerol cysteine moiety is linked to residue Cys-20.

The protein belongs to the mycobacterial 19 kDa antigen family.

Its subcellular location is the cell membrane. In Mycobacterium indicus pranii (strain DSM 45239 / MTCC 9506), this protein is Putative lipoprotein MIP_01412.